The sequence spans 243 residues: tRNA (guanine-N(1)-)-methyltransferase (243 aa).

Residues Gly111 and 131 to 136 contribute to the S-adenosyl-L-methionine site; that span reads IGDYVL.

The protein belongs to the RNA methyltransferase TrmD family. Homodimer.

The protein resides in the cytoplasm. The enzyme catalyses guanosine(37) in tRNA + S-adenosyl-L-methionine = N(1)-methylguanosine(37) in tRNA + S-adenosyl-L-homocysteine + H(+). In terms of biological role, specifically methylates guanosine-37 in various tRNAs. The polypeptide is tRNA (guanine-N(1)-)-methyltransferase (Brevibacillus brevis (strain 47 / JCM 6285 / NBRC 100599)).